Consider the following 373-residue polypeptide: MRFGVVFVITQVLADFTYLGCYSSDAISGLTKKDSYTWQSSSHCTEQCSGHAVAALINGQDCYCGDDVPSDNPDGSCTTSCTGYPMEKCGGSDSYSVYVDESEENDDDSSSAQSSHSSTDDATSTSSTSTTSSSSSSLSSSSTSSSSKQSSSPQSSTMSSTDSSPTSSSLSASSTTTSSISSFSFSQSSSSSSTTSSSTPSSESVRITTSVSPGNMQTSIIYITQSVATATSASAAASSSSASSANNRSTGLSKGAKAGIAVGSILGALLLLGLLLLFLFWRRRQRDDRDNLSEKRASSILASSSRQPPAGSRGAAAGIGANRIRIHVRGRQTGHAGHVETVQRRFVAGTLPLEPRCRRIVPDRRFAGGKPRS.

Residues 15 to 101 (DFTYLGCYSS…SDSYSVYVDE (87 aa)) form the WSC domain. Disordered regions lie at residues 101–171 (ESEE…SSLS), 183–210 (FSFS…ITTS), and 291–316 (NLSE…RGAA). 2 stretches are compositionally biased toward low complexity: residues 110 to 171 (SSAQ…SSLS) and 183 to 204 (FSFS…SSES).

This is an uncharacterized protein from Pichia angusta (Yeast).